The following is a 280-amino-acid chain: Urease accessory protein UreD (280 aa).

Belongs to the UreD family. UreD, UreF and UreG form a complex that acts as a GTP-hydrolysis-dependent molecular chaperone, activating the urease apoprotein by helping to assemble the nickel containing metallocenter of UreC. The UreE protein probably delivers the nickel.

It is found in the cytoplasm. Functionally, required for maturation of urease via the functional incorporation of the urease nickel metallocenter. This Pseudomonas aeruginosa (strain ATCC 15692 / DSM 22644 / CIP 104116 / JCM 14847 / LMG 12228 / 1C / PRS 101 / PAO1) protein is Urease accessory protein UreD.